Here is a 491-residue protein sequence, read N- to C-terminus: GTPase Der (491 aa).

2 EngA-type G domains span residues Pro54 to Ser217 and Arg229 to Asp402. GTP contacts are provided by residues Gly60 to Ser67, Asp107 to Trp111, Asn169 to Asp172, Gly235 to Ser242, Asp282 to Ile286, and Asn347 to Asp350. The KH-like domain maps to Arg403 to Glu485.

This sequence belongs to the TRAFAC class TrmE-Era-EngA-EngB-Septin-like GTPase superfamily. EngA (Der) GTPase family. As to quaternary structure, associates with the 50S ribosomal subunit.

In terms of biological role, GTPase that plays an essential role in the late steps of ribosome biogenesis. The polypeptide is GTPase Der (Paenarthrobacter aurescens (strain TC1)).